A 674-amino-acid polypeptide reads, in one-letter code: Leucine-rich repeat transmembrane protein FLRT1 (674 aa).

Positions 1 to 51 (MVVAHSAATATTTPAATVTATVVMTTATMDLRDWLFLCYGLIAFLTEVIDS) are cleaved as a signal peptide. The Extracellular segment spans residues 52–552 (TTCPSVCRCD…QNAGPMAGLP (501 aa)). Disulfide bonds link Cys54–Cys60 and Cys58–Cys67. The LRRNT domain maps to 54–80 (CPSVCRCDNGFIYCNDRGLTSIPSDIP). 10 LRR repeats span residues 81–105 (DDAT…LKTK), 106–126 (VKVQ…INLP), 127–149 (RSLR…SLAR), 151–175 (PLLE…AFAD), 176–197 (SKQL…SGLP), 198–220 (HTLE…AFKG), 222–246 (NSLR…TFSR), 247–269 (LQNL…NLPS), 270–292 (AHLQ…TLAK), and 293–316 (MREL…LFDD). Asn305 is a glycosylation site (N-linked (GlcNAc...) asparagine). The 52-residue stretch at 328 to 379 (NPWFCGCNLMWLRDWVRARAAVVNVRGLMCQGPEKVRGMAIKDITSEMDECF) folds into the LRRCT domain. Cys332 and Cys357 are disulfide-bonded. Positions 437–532 (KTLVIQVKPL…VCAKAETADS (96 aa)) constitute a Fibronectin type-III domain. The chain crosses the membrane as a helical span at residues 553-573 (LAGIIGGAVALVFLFLVLGAI). Topologically, residues 574-674 (CWYVHRAGEL…GIPDVDYSYT (101 aa)) are cytoplasmic. Tyr600, Tyr633, and Tyr671 each carry phosphotyrosine.

As to quaternary structure, interacts with FGFR1. Interacts (via extracellular domain) with ADGRL1/LPHN1 and ADGRL3 (via olfactomedin-like domain). Post-translationally, phosphorylated in response to FGFR1 signaling, but is not a direct substrate of FGFR1 or SRC. A mutant where the Tyr phosphorylation sites have been replaced by Phe displays constitutive FGFR1-dependent activation of downstream MAP kinases. N-glycosylated. In terms of processing, proteolytic cleavage in the juxtamembrane region gives rise to a soluble ectodomain. Detected in brain (at protein level).

It localises to the cell membrane. The protein localises to the endoplasmic reticulum membrane. It is found in the cytoplasmic vesicle membrane. The protein resides in the cytoplasm. Its subcellular location is the perinuclear region. It localises to the cell junction. The protein localises to the focal adhesion. It is found in the secreted. The protein resides in the cell projection. Its subcellular location is the neuron projection. Functionally, plays a role in fibroblast growth factor-mediated signaling cascades that lead to the activation of MAP kinases. Promotes neurite outgrowth via FGFR1-mediated activation of downstream MAP kinases. Promotes an increase both in neurite number and in neurite length. May play a role in cell-cell adhesion and cell guidance via its interaction with ADGRL1/LPHN1 and ADGRL3. The polypeptide is Leucine-rich repeat transmembrane protein FLRT1 (Mus musculus (Mouse)).